Reading from the N-terminus, the 704-residue chain is Polyribonucleotide nucleotidyltransferase (704 aa).

Mg(2+)-binding residues include aspartate 490 and aspartate 496. One can recognise a KH domain in the interval 557 to 616; the sequence is PKIEMIQIKPAKIKDVIGKGGETINSIIDETGVKIDIDQDGNVSIASSDAEMIKKAIKII. One can recognise an S1 motif domain in the interval 626-694; the sequence is GQVYLAKVVR…KQGRVNVSRK (69 aa).

This sequence belongs to the polyribonucleotide nucleotidyltransferase family. It depends on Mg(2+) as a cofactor.

It localises to the cytoplasm. The enzyme catalyses RNA(n+1) + phosphate = RNA(n) + a ribonucleoside 5'-diphosphate. Its function is as follows. Involved in mRNA degradation. Catalyzes the phosphorolysis of single-stranded polyribonucleotides processively in the 3'- to 5'-direction. In Enterococcus faecalis (strain ATCC 700802 / V583), this protein is Polyribonucleotide nucleotidyltransferase.